The following is a 257-amino-acid chain: MMSNDIFPNKFKAALAAQRIQIGCWSALANPISTEVLGLAGFDWLVLDGEHAPNDISTFIPQLMALKGSASAPVVRVPTNEPVIIKRLLDIGFYNFLIPFVETEEEAVRAVASTRYPPEGIRGVSVSHRANMFGTVPDYFAQSNKNITILVQIESQQGVDNVDAIAATEGVDGIFVGPSDLAAALGHLGNASHPEVQKTIQHIFARAKAHGKPCGILAPVEADARRYLEWGATFVAVGSDLGVFRSATQKLADAFKK.

The active-site Proton acceptor is His-51. A substrate-binding site is contributed by Gln-152. Glu-154 is a Mg(2+) binding site. 2 residues coordinate substrate: Ser-179 and Asp-180. Residue Asp-180 coordinates Mg(2+).

This sequence belongs to the HpcH/HpaI aldolase family. KDGluc aldolase subfamily. Homohexamer; trimer of dimers. Requires Mg(2+) as cofactor.

The catalysed reaction is 5-dehydro-4-deoxy-D-glucarate = 2-hydroxy-3-oxopropanoate + pyruvate. It carries out the reaction 2-dehydro-3-deoxy-D-glucarate = 2-hydroxy-3-oxopropanoate + pyruvate. Its pathway is carbohydrate acid metabolism; galactarate degradation; D-glycerate from galactarate: step 2/3. Catalyzes the reversible retro-aldol cleavage of both 5-keto-4-deoxy-D-glucarate and 2-keto-3-deoxy-D-glucarate to pyruvate and tartronic semialdehyde. This chain is 5-keto-4-deoxy-D-glucarate aldolase, found in Citrobacter koseri (strain ATCC BAA-895 / CDC 4225-83 / SGSC4696).